Consider the following 295-residue polypeptide: GTPase Era (295 aa).

An Era-type G domain is found at 7–176 (KTVSVCIIGR…ITSKAKIAPW (170 aa)). The interval 15-22 (GRPNSGKS) is G1. 15-22 (GRPNSGKS) lines the GTP pocket. Positions 41–45 (QTTRS) are G2. The tract at residues 62–65 (DTPG) is G3. GTP-binding positions include 62–66 (DTPGI) and 124–127 (NKIE). The G4 stretch occupies residues 124 to 127 (NKIE). Positions 152 to 154 (ISA) are G5. Residues 204-281 (LQQELPYKLT…HLFLFVKVRE (78 aa)) form the KH type-2 domain.

This sequence belongs to the TRAFAC class TrmE-Era-EngA-EngB-Septin-like GTPase superfamily. Era GTPase family. In terms of assembly, monomer.

The protein localises to the cytoplasm. It is found in the cell inner membrane. Functionally, an essential GTPase that binds both GDP and GTP, with rapid nucleotide exchange. Plays a role in 16S rRNA processing and 30S ribosomal subunit biogenesis and possibly also in cell cycle regulation and energy metabolism. The polypeptide is GTPase Era (Rickettsia canadensis (strain McKiel)).